Reading from the N-terminus, the 120-residue chain is NAD(P)H-quinone oxidoreductase subunit 3, chloroplastic (120 aa).

3 consecutive transmembrane segments (helical) span residues 9-29, 64-84, and 88-108; these read IFWA…LISG, MFAL…PWAM, and VLGV…ILGL.

The protein belongs to the complex I subunit 3 family. In terms of assembly, NDH is composed of at least 16 different subunits, 5 of which are encoded in the nucleus.

Its subcellular location is the plastid. The protein localises to the chloroplast thylakoid membrane. It catalyses the reaction a plastoquinone + NADH + (n+1) H(+)(in) = a plastoquinol + NAD(+) + n H(+)(out). The catalysed reaction is a plastoquinone + NADPH + (n+1) H(+)(in) = a plastoquinol + NADP(+) + n H(+)(out). Functionally, NDH shuttles electrons from NAD(P)H:plastoquinone, via FMN and iron-sulfur (Fe-S) centers, to quinones in the photosynthetic chain and possibly in a chloroplast respiratory chain. The immediate electron acceptor for the enzyme in this species is believed to be plastoquinone. Couples the redox reaction to proton translocation, and thus conserves the redox energy in a proton gradient. In Aethionema grandiflorum (Persian stone-cress), this protein is NAD(P)H-quinone oxidoreductase subunit 3, chloroplastic.